A 257-amino-acid polypeptide reads, in one-letter code: 1-(5-phosphoribosyl)-5-[(5-phosphoribosylamino)methylideneamino] imidazole-4-carboxamide isomerase (257 aa).

The active-site Proton acceptor is the D8. The active-site Proton donor is the D129.

Belongs to the HisA/HisF family.

It is found in the cytoplasm. It catalyses the reaction 1-(5-phospho-beta-D-ribosyl)-5-[(5-phospho-beta-D-ribosylamino)methylideneamino]imidazole-4-carboxamide = 5-[(5-phospho-1-deoxy-D-ribulos-1-ylimino)methylamino]-1-(5-phospho-beta-D-ribosyl)imidazole-4-carboxamide. Its pathway is amino-acid biosynthesis; L-histidine biosynthesis; L-histidine from 5-phospho-alpha-D-ribose 1-diphosphate: step 4/9. This chain is 1-(5-phosphoribosyl)-5-[(5-phosphoribosylamino)methylideneamino] imidazole-4-carboxamide isomerase, found in Acaryochloris marina (strain MBIC 11017).